A 178-amino-acid polypeptide reads, in one-letter code: Fatty-acid and retinol-binding protein 1 (178 aa).

The first 16 residues, 1 to 16 (MYHQLILMALIGVIMA), serve as a signal peptide directing secretion. N-linked (GlcNAc...) asparagine glycans are attached at residues N44 and N75. Coiled-coil stretches lie at residues 67-89 (DAAL…ELRN) and 123-154 (KLDM…LKAT). The N-linked (GlcNAc...) asparagine glycan is linked to N157.

The protein belongs to the fatty-acid and retinol-binding protein (FARBP) family. Post-translationally, N-glycosylated.

The protein localises to the secreted. Functionally, binds retinol and different fatty acids. The polypeptide is Fatty-acid and retinol-binding protein 1 (Onchocerca gutturosa).